Here is a 140-residue protein sequence, read N- to C-terminus: Nucleoside diphosphate kinase (140 aa).

K11, F59, R87, T93, R104, and N114 together coordinate ATP. H117 (pros-phosphohistidine intermediate) is an active-site residue.

The protein belongs to the NDK family. Homotetramer. The cofactor is Mg(2+).

The protein resides in the cytoplasm. The catalysed reaction is a 2'-deoxyribonucleoside 5'-diphosphate + ATP = a 2'-deoxyribonucleoside 5'-triphosphate + ADP. It catalyses the reaction a ribonucleoside 5'-diphosphate + ATP = a ribonucleoside 5'-triphosphate + ADP. Major role in the synthesis of nucleoside triphosphates other than ATP. The ATP gamma phosphate is transferred to the NDP beta phosphate via a ping-pong mechanism, using a phosphorylated active-site intermediate. The polypeptide is Nucleoside diphosphate kinase (Agrobacterium fabrum (strain C58 / ATCC 33970) (Agrobacterium tumefaciens (strain C58))).